Consider the following 117-residue polypeptide: MKPYKSKINKIRSFALALIFIGFIVMYGGIFFKNSPILVLIFMTLGVLCIIGSTVVYAWIGLLSTRAIQVECPNCHKHTKVLGRVDMCMYCNEPLTLDPTLEGKEFDQSYNHKTKKS.

A run of 2 helical transmembrane segments spans residues 13–33 and 37–57; these read SFAL…IFFK and ILVL…TVVY.

The protein belongs to the UPF0295 family.

The protein resides in the cell membrane. This is UPF0295 protein Bsph_0336 from Lysinibacillus sphaericus (strain C3-41).